Consider the following 371-residue polypeptide: N-acetyldiaminopimelate deacetylase (371 aa).

Asp-68 is a catalytic residue. Glu-127 acts as the Proton acceptor in catalysis.

It belongs to the peptidase M20A family. N-acetyldiaminopimelate deacetylase subfamily.

The catalysed reaction is N-acetyl-(2S,6S)-2,6-diaminopimelate + H2O = (2S,6S)-2,6-diaminopimelate + acetate. Its pathway is amino-acid biosynthesis; L-lysine biosynthesis via DAP pathway; LL-2,6-diaminopimelate from (S)-tetrahydrodipicolinate (acetylase route): step 3/3. Catalyzes the conversion of N-acetyl-diaminopimelate to diaminopimelate and acetate. This is N-acetyldiaminopimelate deacetylase from Listeria innocua serovar 6a (strain ATCC BAA-680 / CLIP 11262).